Reading from the N-terminus, the 315-residue chain is Olfactory receptor 8J2 (315 aa).

The Extracellular segment spans residues 1–24 (MASGNLTWVTEFILVGVSDDPELQ). A glycan (N-linked (GlcNAc...) asparagine) is linked at Asn5. A helical transmembrane segment spans residues 25–45 (IPLFLVFLVLYLLTVAGNLGI). At 46–57 (ITLTSVDPQLQT) the chain is on the cytoplasmic side. Residues 58 to 78 (PMYFFLRHLAIINLCNSTVVA) form a helical membrane-spanning segment. Over 79-97 (PKMLVNFLVTKKTISYYGC) the chain is Extracellular. Residues Cys97 and Cys179 are joined by a disulfide bond. Residues 98 to 118 (AAQLGGFLVFIVAEIFTLAAM) traverse the membrane as a helical segment. Over 119 to 143 (AYDRYVAIWSPLLYAVVVSPKVCRL) the chain is Cytoplasmic. Residues 144-164 (LVSLTYLQSLITALTVSSCVF) form a helical membrane-spanning segment. Over 165 to 205 (SVSYCSSNIINHFYCDDVPLLALSCSDTYIPETAVFIFSGT) the chain is Extracellular. Residues 206-226 (NLLFSMIVVLISYFNIVITIL) traverse the membrane as a helical segment. At 227 to 239 (RIRSSEGRQKAFS) the chain is on the cytoplasmic side. A helical membrane pass occupies residues 240-260 (TCASHMIAVVVFYGTLLFMYL). Topologically, residues 261-271 (QPRSNHSLDTD) are extracellular. N-linked (GlcNAc...) asparagine glycosylation is present at Asn265. Residues 272-292 (KMASVFYTLVIPVLNPLIYSL) form a helical membrane-spanning segment. Over 293–315 (RNKNVKDALKRFLDNPCRSLKLM) the chain is Cytoplasmic.

Belongs to the G-protein coupled receptor 1 family.

The protein localises to the membrane. Its function is as follows. Odorant receptor. The chain is Olfactory receptor 8J2 (OR8J2) from Homo sapiens (Human).